The chain runs to 462 residues: Argininosuccinate lyase (462 aa).

Belongs to the lyase 1 family. Argininosuccinate lyase subfamily.

The protein resides in the cytoplasm. The catalysed reaction is 2-(N(omega)-L-arginino)succinate = fumarate + L-arginine. Its pathway is amino-acid biosynthesis; L-arginine biosynthesis; L-arginine from L-ornithine and carbamoyl phosphate: step 3/3. This Bacillus cereus (strain ATCC 14579 / DSM 31 / CCUG 7414 / JCM 2152 / NBRC 15305 / NCIMB 9373 / NCTC 2599 / NRRL B-3711) protein is Argininosuccinate lyase.